Consider the following 602-residue polypeptide: Glutamyl-tRNA(Gln) amidotransferase subunit B, mitochondrial (602 aa).

This sequence belongs to the GatB/GatE family. GatB subfamily. In terms of assembly, subunit of the heterotrimeric GatCAB amidotransferase (AdT) complex, composed of A, B and C subunits.

It is found in the mitochondrion. It carries out the reaction L-glutamyl-tRNA(Gln) + L-glutamine + ATP + H2O = L-glutaminyl-tRNA(Gln) + L-glutamate + ADP + phosphate + H(+). Functionally, allows the formation of correctly charged Gln-tRNA(Gln) through the transamidation of misacylated Glu-tRNA(Gln) in the mitochondria. The reaction takes place in the presence of glutamine and ATP through an activated gamma-phospho-Glu-tRNA(Gln). The sequence is that of Glutamyl-tRNA(Gln) amidotransferase subunit B, mitochondrial from Paracoccidioides lutzii (strain ATCC MYA-826 / Pb01) (Paracoccidioides brasiliensis).